The chain runs to 297 residues: tRNA (guanine(37)-N(1))/4-demethylwyosine(37)-methyltransferase Taw22 (297 aa).

Residues R89, F106, and E128–L129 each bind S-adenosyl-L-methionine.

The protein belongs to the class I-like SAM-binding methyltransferase superfamily. TRM5/TYW2 family.

Its subcellular location is the cytoplasm. The catalysed reaction is guanosine(37) in tRNA + S-adenosyl-L-methionine = N(1)-methylguanosine(37) in tRNA + S-adenosyl-L-homocysteine + H(+). It carries out the reaction 4-demethylwyosine(37) in tRNA(Phe) + S-adenosyl-L-methionine = isowyosine(37) in tRNA(Phe) + S-adenosyl-L-homocysteine + H(+). Its function is as follows. Catalyzes both the N1-methylation of guanosine and the C7-methylation of 4-demethylwyosine (imG-14) at position 37 in tRNA(Phe). The protein is tRNA (guanine(37)-N(1))/4-demethylwyosine(37)-methyltransferase Taw22 of Nanoarchaeum equitans (strain Kin4-M).